The chain runs to 344 residues: Cinnamoyl-CoA reductase 1 (344 aa).

A Phosphoserine modification is found at serine 7. Residues 17–23, arginine 42, lysine 48, 68–69, 88–90, tyrosine 161, lysine 165, 188–191, and serine 203 each bind NADP(+); these read GAGGYIA, DL, TAS, and PVLV. A disulfide bond links cysteine 154 and cysteine 162. Residue lysine 165 is the Proton donor of the active site. The segment at 317 to 344 is disordered; it reads QEKGHLAPPPPPPSASQESVENGIKIGS.

It belongs to the NAD(P)-dependent epimerase/dehydratase family. Dihydroflavonol-4-reductase subfamily. As to expression, expressed in leaves, stems and flowers.

It carries out the reaction (E)-cinnamaldehyde + NADP(+) + CoA = (E)-cinnamoyl-CoA + NADPH + H(+). It functions in the pathway aromatic compound metabolism; phenylpropanoid biosynthesis. Involved in the latter stages of lignin biosynthesis. Catalyzes one of the last steps of monolignol biosynthesis, the conversion of cinnamoyl-CoAs into their corresponding cinnamaldehydes. The sequence is that of Cinnamoyl-CoA reductase 1 from Arabidopsis thaliana (Mouse-ear cress).